Reading from the N-terminus, the 109-residue chain is Probable WRKY transcription factor 43 (109 aa).

The segment at residues serine 24 to glutamate 89 is a DNA-binding region (WRKY).

This sequence belongs to the WRKY group II-c family.

The protein resides in the nucleus. Functionally, transcription factor. Interacts specifically with the W box (5'-(T)TGAC[CT]-3'), a frequently occurring elicitor-responsive cis-acting element. This is Probable WRKY transcription factor 43 (WRKY43) from Arabidopsis thaliana (Mouse-ear cress).